A 210-amino-acid polypeptide reads, in one-letter code: HTH-type transcriptional repressor FabR (210 aa).

Residues K10 to L70 form the HTH tetR-type domain. The H-T-H motif DNA-binding region spans S33–F52.

In terms of assembly, homodimer.

Its subcellular location is the cytoplasm. Functionally, represses the transcription of fabB, involved in unsaturated fatty acid (UFA) biosynthesis. By controlling UFA production, FabR directly influences the physical properties of the membrane bilayer. The sequence is that of HTH-type transcriptional repressor FabR from Salmonella arizonae (strain ATCC BAA-731 / CDC346-86 / RSK2980).